Here is a 440-residue protein sequence, read N- to C-terminus: Proline--tRNA ligase (440 aa).

The protein belongs to the class-II aminoacyl-tRNA synthetase family. ProS type 2 subfamily. As to quaternary structure, homodimer.

It is found in the cytoplasm. The enzyme catalyses tRNA(Pro) + L-proline + ATP = L-prolyl-tRNA(Pro) + AMP + diphosphate. Catalyzes the attachment of proline to tRNA(Pro) in a two-step reaction: proline is first activated by ATP to form Pro-AMP and then transferred to the acceptor end of tRNA(Pro). The polypeptide is Proline--tRNA ligase (Azorhizobium caulinodans (strain ATCC 43989 / DSM 5975 / JCM 20966 / LMG 6465 / NBRC 14845 / NCIMB 13405 / ORS 571)).